The sequence spans 318 residues: DNA-directed RNA polymerase subunit alpha 2 (318 aa).

Residues 1-227 (MALENLLHPT…NQLRNIVDIE (227 aa)) are alpha N-terminal domain (alpha-NTD). Positions 242–318 (INPILLKHVE…TLIENWPQDL (77 aa)) are alpha C-terminal domain (alpha-CTD).

It belongs to the RNA polymerase alpha chain family. Homodimer. The RNAP catalytic core consists of 2 alpha, 1 beta, 1 beta' and 1 omega subunit. When a sigma factor is associated with the core the holoenzyme is formed, which can initiate transcription.

It carries out the reaction RNA(n) + a ribonucleoside 5'-triphosphate = RNA(n+1) + diphosphate. In terms of biological role, DNA-dependent RNA polymerase catalyzes the transcription of DNA into RNA using the four ribonucleoside triphosphates as substrates. This Francisella tularensis subsp. novicida (strain U112) protein is DNA-directed RNA polymerase subunit alpha 2.